Reading from the N-terminus, the 512-residue chain is uncharacterized protein (512 aa).

This is an uncharacterized protein from Methanocaldococcus jannaschii (strain ATCC 43067 / DSM 2661 / JAL-1 / JCM 10045 / NBRC 100440) (Methanococcus jannaschii).